A 444-amino-acid polypeptide reads, in one-letter code: Ribosomal protein uS12 methylthiotransferase RimO (444 aa).

One can recognise an MTTase N-terminal domain in the interval 4 to 120 (KSAALVSLGC…LKSFIRDHEA (117 aa)). Residues C13, C49, C83, C157, C161, and C164 each coordinate [4Fe-4S] cluster. The region spanning 143 to 371 (VEGRSSAYVK…LELQRGISRR (229 aa)) is the Radical SAM core domain. The TRAM domain maps to 374-442 (ESLVGRVLPV…DYDVEAELLS (69 aa)).

The protein belongs to the methylthiotransferase family. RimO subfamily. The cofactor is [4Fe-4S] cluster.

It localises to the cytoplasm. The enzyme catalyses L-aspartate(89)-[ribosomal protein uS12]-hydrogen + (sulfur carrier)-SH + AH2 + 2 S-adenosyl-L-methionine = 3-methylsulfanyl-L-aspartate(89)-[ribosomal protein uS12]-hydrogen + (sulfur carrier)-H + 5'-deoxyadenosine + L-methionine + A + S-adenosyl-L-homocysteine + 2 H(+). Its function is as follows. Catalyzes the methylthiolation of an aspartic acid residue of ribosomal protein uS12. This chain is Ribosomal protein uS12 methylthiotransferase RimO, found in Syntrophobacter fumaroxidans (strain DSM 10017 / MPOB).